We begin with the raw amino-acid sequence, 185 residues long: Peptidyl-tRNA hydrolase (185 aa).

Position 14 (tyrosine 14) interacts with tRNA. Histidine 19 acts as the Proton acceptor in catalysis. Residues phenylalanine 64, asparagine 66, and asparagine 112 each coordinate tRNA.

This sequence belongs to the PTH family. In terms of assembly, monomer.

Its subcellular location is the cytoplasm. It catalyses the reaction an N-acyl-L-alpha-aminoacyl-tRNA + H2O = an N-acyl-L-amino acid + a tRNA + H(+). Its function is as follows. Hydrolyzes ribosome-free peptidyl-tRNAs (with 1 or more amino acids incorporated), which drop off the ribosome during protein synthesis, or as a result of ribosome stalling. Functionally, catalyzes the release of premature peptidyl moieties from peptidyl-tRNA molecules trapped in stalled 50S ribosomal subunits, and thus maintains levels of free tRNAs and 50S ribosomes. In Lactobacillus johnsonii (strain CNCM I-12250 / La1 / NCC 533), this protein is Peptidyl-tRNA hydrolase.